The primary structure comprises 92 residues: Small ribosomal subunit protein uS19c (92 aa).

The protein belongs to the universal ribosomal protein uS19 family.

The protein resides in the plastid. It is found in the chloroplast. Functionally, protein S19 forms a complex with S13 that binds strongly to the 16S ribosomal RNA. The sequence is that of Small ribosomal subunit protein uS19c (rps19) from Pinus thunbergii (Japanese black pine).